A 164-amino-acid chain; its full sequence is UPF0225 protein Shewmr4_2054 (164 aa).

Belongs to the UPF0225 family.

The protein is UPF0225 protein Shewmr4_2054 of Shewanella sp. (strain MR-4).